A 129-amino-acid polypeptide reads, in one-letter code: Large ribosomal subunit protein bL19 (129 aa).

Functionally, this protein is located at the 30S-50S ribosomal subunit interface and may play a role in the structure and function of the aminoacyl-tRNA binding site. This chain is Large ribosomal subunit protein bL19, found in Rhodopseudomonas palustris (strain ATCC BAA-98 / CGA009).